The following is a 407-amino-acid chain: Argininosuccinate synthase (407 aa).

ATP is bound at residue 10-18 (AYSGGLDTS). L-citrulline is bound by residues Y88 and S93. G118 is an ATP binding site. L-aspartate contacts are provided by T120, N124, and D125. N124 lines the L-citrulline pocket. L-citrulline contacts are provided by R128, S177, S186, E263, and Y275.

Belongs to the argininosuccinate synthase family. Type 1 subfamily. As to quaternary structure, homotetramer.

The protein localises to the cytoplasm. The catalysed reaction is L-citrulline + L-aspartate + ATP = 2-(N(omega)-L-arginino)succinate + AMP + diphosphate + H(+). It functions in the pathway amino-acid biosynthesis; L-arginine biosynthesis; L-arginine from L-ornithine and carbamoyl phosphate: step 2/3. The protein is Argininosuccinate synthase of Clostridium botulinum (strain Alaska E43 / Type E3).